The following is a 116-amino-acid chain: Outer membrane protein assembly factor BamE (116 aa).

Positions 1 to 22 (MITMRCKMLTAAAVMLAMLTAG) are cleaved as a signal peptide. A lipid anchor (N-palmitoyl cysteine) is attached at Cys23. The S-diacylglycerol cysteine moiety is linked to residue Cys23.

Belongs to the BamE family. Part of the Bam complex, which is composed of the outer membrane protein BamA, and four lipoproteins BamB, BamC, BamD and BamE.

It is found in the cell outer membrane. Functionally, part of the outer membrane protein assembly complex, which is involved in assembly and insertion of beta-barrel proteins into the outer membrane. The sequence is that of Outer membrane protein assembly factor BamE from Yersinia pestis.